A 221-amino-acid polypeptide reads, in one-letter code: GTP-binding nuclear protein Ran-A1 (221 aa).

In terms of domain architecture, Small GTPase Ran-type spans 10–174 (DYPSFKLVIV…LYLARKLAGD (165 aa)). A GTP-binding site is contributed by 21–28 (DGGTGKTT). A switch-I region spans residues 40–48 (KKYEPTIGV). GTP is bound by residues Gly-71, 125–128 (NKVD), and 153–155 (SAK). Residues 71 to 87 (GQEKFGGLRDGYYIHGQ) form a switch-II region. The span at 199-208 (QHEAELAAAA) shows a compositional bias: low complexity. The tract at residues 199–221 (QHEAELAAAASQPLPDDDDETFD) is disordered.

This sequence belongs to the small GTPase superfamily. Ran family. In terms of assembly, found in a nuclear export complex with RanGTP, exportin and pre-miRNA.

Its subcellular location is the nucleus. GTP-binding protein involved in nucleocytoplasmic transport. Required for the import of protein into the nucleus and also for RNA export. Involved in chromatin condensation and control of cell cycle. The polypeptide is GTP-binding nuclear protein Ran-A1 (RAN-A1) (Nicotiana tabacum (Common tobacco)).